Here is a 603-residue protein sequence, read N- to C-terminus: ADP-ribosylation factor-binding protein GGA2 (603 aa).

Residues 1–22 (MAATAVAAGTGSPAGTESAEGG) form a disordered region. The segment covering 13–22 (PAGTESAEGG) has biased composition (low complexity). Positions 36–166 (ATDPSMAEQD…MLKKQGIIKQ (131 aa)) constitute a VHS domain. In terms of domain architecture, GAT spans 190–317 (DEEKSKLLTR…GVRLYKQVVE (128 aa)). Residues 318–473 (GRVSAGNAVP…VFVPLESVKP (156 aa)) are unstructured hinge. The GAE domain occupies 474-595 (SSLPPIVVYD…SEVGEVKDFP (122 aa)).

This sequence belongs to the GGA protein family. Monomer. Interacts with NECAP1, TSG101, UBC and AFTPH/aftiphilin. Interacts with CNST. Interacts with GGA1 and GGA3. Binds to clathrin and activated ARFs, such as ARF1, ARF5 and ARF6. Binds RABEP1 and RABGEF1. Interacts with the type-I membrane proteins LRP3, M6PR/CD-MPR, IGF2R/CI-MPR and BACE1. Interacts (via N-terminal VHS domain) with SORL1/sorLA and SORT1 (via C-terminal cytosolic domain). Binds the accessory proteins CCDC91, P200, SYNRG, EPN4 and NECAP2. Interacts with ADRA2B. Interacts (via VHS domain) with PIK4B; the interaction is important for PIK4B location at the Golgi apparatus membrane. Post-translationally, ubiquitinated.

It localises to the golgi apparatus. It is found in the trans-Golgi network membrane. Its subcellular location is the endosome membrane. The protein resides in the early endosome membrane. Plays a role in protein sorting and trafficking between the trans-Golgi network (TGN) and endosomes. Mediates the ARF-dependent recruitment of clathrin to the TGN and binds ubiquitinated proteins and membrane cargo molecules with a cytosolic acidic cluster-dileucine (DXXLL) motif. Mediates export of the GPCR receptor ADRA2B to the cell surface. Regulates retrograde transport of phosphorylated form of BACE1 from endosomes to the trans-Golgi network. This chain is ADP-ribosylation factor-binding protein GGA2 (Gga2), found in Mus musculus (Mouse).